A 380-amino-acid polypeptide reads, in one-letter code: MLVIPPGLSEEEEALQKKFNKLKKKKKALLALKKQSSSSTTSQGGVKRSLSEQPVMDTATATEQAKQLVKSGAISAIKAETKNSGFKRSRTLEGKLKDPEKGPVPTFQPFQRSISADDDLQESSRRPQRKSLYESFVSSSDRLRELGPDGEEAEGPGAGDGPPRSFDWGYEERSGAHSSASPPRSRSRDRSHERNRDRDRDRERDRDRDRDRDRERDRDRDRDRDRDRERDRDRERDRDRDREGPFRRSDSFPERRAPRKGNTLYVYGEDMTPTLLRGAFSPFGNIIDLSMDPPRNCAFVTYEKMESADQAVAELNGTQVESVQLKVNIARKQPMLDAATGKSVWGSLAVQNSPKGCHRDKRTQIVYSDDVYKENLVDGF.

Residues 7–36 adopt a coiled-coil conformation; it reads GLSEEEEALQKKFNKLKKKKKALLALKKQS. Low complexity predominate over residues 30–43; that stretch reads LALKKQSSSSTTSQ. The interval 30-67 is disordered; the sequence is LALKKQSSSSTTSQGGVKRSLSEQPVMDTATATEQAKQ. Ser51 carries the post-translational modification Phosphoserine. Residue Lys78 forms a Glycyl lysine isopeptide (Lys-Gly) (interchain with G-Cter in SUMO1); alternate linkage. Lys78 participates in a covalent cross-link: Glycyl lysine isopeptide (Lys-Gly) (interchain with G-Cter in SUMO2); alternate. The segment at 79–258 is disordered; it reads AETKNSGFKR…SDSFPERRAP (180 aa). Lys82 participates in a covalent cross-link: Glycyl lysine isopeptide (Lys-Gly) (interchain with G-Cter in SUMO2). Over residues 90–101 the composition is skewed to basic and acidic residues; sequence RTLEGKLKDPEK. Ser113 and Ser115 each carry phosphoserine. Glu122 is modified (polyADP-ribosyl glutamic acid). Phosphoserine occurs at positions 131 and 139. Glu151 carries the post-translational modification PolyADP-ribosyl glutamic acid. At Ser165 the chain carries Phosphoserine. Glu172 carries the polyADP-ribosyl glutamic acid modification. Ser179 bears the Phosphoserine mark. Phosphoserine; by CDK9 is present on residues Ser181, Ser185, and Ser187. 4 consecutive repeat copies span residues 184 to 185, 186 to 187, 188 to 189, and 190 to 191. The 30 X 2 AA approximate tandem repeats of R-[DSNE] stretch occupies residues 184-243; sequence RSRSRDRSHERNRDRDRDRERDRDRDRDRDRERDRDRDRDRDRDRERDRDRERDRDRDRE. A compositionally biased stretch (basic and acidic residues) spans 186 to 256; the sequence is RSRDRSHERN…RRSDSFPERR (71 aa). Ser191 is modified (phosphoserine; by CDK9). A 5; approximate repeat occupies 192 to 193; sequence HE. A run of 25 repeats spans residues 194–195, 196–197, 198–199, 200–201, 202–203, 204–205, 206–207, 208–209, 210–211, 212–213, 214–215, 216–217, 218–219, 220–221, 222–223, 224–225, 226–227, 228–229, 230–231, 232–233, 234–235, 236–237, 238–239, 240–241, and 242–243. 2 positions are modified to phosphoserine: Ser249 and Ser251. One can recognise an RRM domain in the interval 262–332; sequence NTLYVYGEDM…VQLKVNIARK (71 aa). A phosphothreonine mark is found at Thr272 and Thr274. Residues Ser281 and Ser353 each carry the phosphoserine modification. Glu374 bears the PolyADP-ribosyl glutamic acid mark.

The protein belongs to the RRM NELF-E family. In terms of assembly, the NELF complex is composed of NELFA, NELFB, NELFCD (isoform NELF-C or isoform NELF-D) and NELFE. Interacts with NELFB. As to quaternary structure, (Microbial infection) Binds to the HIV-1 TAR RNA which is located in the long terminal repeat (LTR) of HIV-1. Phosphorylated by the P-TEFb complex at sites next to its RNA recognition motif, promoting its release from chromatin. In terms of processing, sumoylated. Post-translationally, poly-ADP-ribosylated by PARP1, thereby preventing RNA-binding and relieving transcription pausing. In terms of tissue distribution, widely expressed. Expressed in heart, brain, lung, placenta, liver, skeletal muscle, kidney and pancreas.

The protein localises to the nucleus. The protein resides in the chromosome. Its function is as follows. Essential component of the NELF complex, a complex that negatively regulates the elongation of transcription by RNA polymerase II. The NELF complex, which acts via an association with the DSIF complex and causes transcriptional pausing, is counteracted by the P-TEFb kinase complex. Provides the strongest RNA binding activity of the NELF complex and may initially recruit the NELF complex to RNA. (Microbial infection) The NELF complex is involved in HIV-1 latency possibly involving recruitment of PCF11 to paused RNA polymerase II. The chain is Negative elongation factor E (NELFE) from Homo sapiens (Human).